A 149-amino-acid polypeptide reads, in one-letter code: Arginine repressor (149 aa).

The protein belongs to the ArgR family.

The protein resides in the cytoplasm. The protein operates within amino-acid biosynthesis; L-arginine biosynthesis [regulation]. Its function is as follows. Regulates arginine biosynthesis genes. The protein is Arginine repressor of Alkaliphilus oremlandii (strain OhILAs) (Clostridium oremlandii (strain OhILAs)).